The primary structure comprises 142 residues: Putative pre-16S rRNA nuclease (142 aa).

It belongs to the YqgF nuclease family.

It is found in the cytoplasm. Its function is as follows. Could be a nuclease involved in processing of the 5'-end of pre-16S rRNA. This Blochmanniella floridana protein is Putative pre-16S rRNA nuclease.